The primary structure comprises 597 residues: Elongation factor 4 (597 aa).

One can recognise a tr-type G domain in the interval 2–184; the sequence is KHIRNFSIIA…TIVKSIPAPE (183 aa). GTP contacts are provided by residues 14-19 and 131-134; these read DHGKST and NKID.

This sequence belongs to the TRAFAC class translation factor GTPase superfamily. Classic translation factor GTPase family. LepA subfamily.

The protein localises to the cell inner membrane. The enzyme catalyses GTP + H2O = GDP + phosphate + H(+). Required for accurate and efficient protein synthesis under certain stress conditions. May act as a fidelity factor of the translation reaction, by catalyzing a one-codon backward translocation of tRNAs on improperly translocated ribosomes. Back-translocation proceeds from a post-translocation (POST) complex to a pre-translocation (PRE) complex, thus giving elongation factor G a second chance to translocate the tRNAs correctly. Binds to ribosomes in a GTP-dependent manner. This is Elongation factor 4 from Aliivibrio fischeri (strain ATCC 700601 / ES114) (Vibrio fischeri).